The chain runs to 1068 residues: MPPRPSSGELWGIHLMPPRILVECLLPNGMIVTLECLREATLVTIKHELFREARKYPLHQLLQDETSYIFVSVTQEAEREEFFDETRRLCDLRLFQPFLKVIEPVGNREEKILNREIGFVIGMPVCEFDMVKDPEVQDFRRNILNVCKEAVDLRDLNSPHSRAMYVYPPNVESSPELPKHIYNKLDKGQIIVVIWVIVSPNNDKQKYTLKINHDCVPEQVIAEAIRKKTRSMLLSSEQLKLCVLEYQGKYILKVCGCDEYFLEKYPLSQYKYIRSCIMLGRMPNLMLMAKESLYSQLPIDSFTMPSYSRRISTATPYMNGETSTKSLWVINSALRIKILCATYVNVNIRDIDKIYVRTGIYHGGEPLCDNVNTQRVPCSNPRWNEWLNYDIYIPDLPRAARLCLSICSVKGRKGAKEEHCPLAWGNINLFDYTDTLVSGKMALNLWPVPHGLEDLLNPIGVTGSNPNKETPCLELEFDWFSSVVKFPDMSVIEEHANWSVSREAGFSYSHTGLSNRLARDNELRENDKEQLRALCTRDPLSEITEQEKDFLWSHRHYCVTIPEILPKLLLSVKWNSRDEVAQMYCLVKDWPPIKPEQAMELLDCNYPDPMVRSFAVRCLEKYLTDDKLSQYLIQLVQVLKYEQYLDNLLVRFLLKKALTNQRIGHFFFWHLKSEMHNKTVSQRFGLLLESYCRACGMYLKHLNRQVEAMEKLINLTDILKQEKKDETQKVQMKFLVEQMRQPDFMDALQGFLSPLNPAHQLGNLRLEECRIMSSAKRPLWLNWENPDIMSELLFQNNEIIFKNGDDLRQDMLTLQIIRIMENIWQNQGLDLRMLPYGCLSIGDCVGLIEVVRNSHTIMQIQCKGGLKGALQFNSHTLHQWLKDKNKGEIYDAAIDLFTRSCAGYCVATFILGIGDRHNSNIMVKDDGQLFHIDFGHFLDHKKKKFGYKRERVPFVLTQDFLIVISKGAQEYTKTREFERFQEMCYKAYLAIRQHANLFINLFSMMLGSGMPELQSFDDIAYIRKTLALDKTEQEALEYFTKQMNDAHHGGWTTKMDWIFHTIKQHALN.

The PI3K-ABD domain occupies 16–105 (MPPRILVECL…QPFLKVIEPV (90 aa)). In terms of domain architecture, PI3K-RBD spans 187-289 (KGQIIVVIWV…GRMPNLMLMA (103 aa)). The C2 PI3K-type domain occupies 330–487 (INSALRIKIL…DWFSSVVKFP (158 aa)). The PIK helical domain occupies 517 to 694 (LARDNELREN…GLLLESYCRA (178 aa)). In terms of domain architecture, PI3K/PI4K catalytic spans 765–1051 (RLEECRIMSS…QMNDAHHGGW (287 aa)). The segment at 771–777 (IMSSAKR) is G-loop. The interval 912-920 (GIGDRHNSN) is catalytic loop. An activation loop region spans residues 931–957 (HIDFGHFLDHKKKKFGYKRERVPFVLT).

It belongs to the PI3/PI4-kinase family. Heterodimer of a catalytic subunit PIK3CA and a p85 regulatory subunit (PIK3R1, PIK3R2 or PIK3R3). Interacts with IRS1 in nuclear extracts. Interacts with RUFY3. Interacts with RASD2. Interacts with APPL1. Interacts with HRAS and KRAS. Interaction with HRAS/KRAS is required for PI3K pathway signaling and cell proliferation stimulated by EGF and FGF2. Interacts with FAM83B; activates the PI3K/AKT signaling cascade.

It carries out the reaction a 1,2-diacyl-sn-glycero-3-phospho-(1D-myo-inositol-4,5-bisphosphate) + ATP = a 1,2-diacyl-sn-glycero-3-phospho-(1D-myo-inositol-3,4,5-trisphosphate) + ADP + H(+). The catalysed reaction is a 1,2-diacyl-sn-glycero-3-phospho-(1D-myo-inositol) + ATP = a 1,2-diacyl-sn-glycero-3-phospho-(1D-myo-inositol-3-phosphate) + ADP + H(+). It catalyses the reaction L-seryl-[protein] + ATP = O-phospho-L-seryl-[protein] + ADP + H(+). The enzyme catalyses 1,2-dioctanoyl-sn-glycero-3-phospho-(1D-myo-inositol-4,5-bisphosphate) + ATP = 1,2-dioctanoyl-sn-glycero-3-phospho-(1D-myo-inositol-3,4,5-trisphosphate) + ADP + H(+). It carries out the reaction 1-octadecanoyl-2-(5Z,8Z,11Z,14Z)-eicosatetraenoyl-sn-glycero-3-phospho-1D-myo-inositol 4,5-bisphosphate + ATP = 1-octadecanoyl-2-(5Z,8Z,11Z,14Z-eicosatetraenoyl)-sn-glycero-3-phospho-(1D-myo-inositol 3,4,5-triphosphate) + ADP + H(+). It functions in the pathway phospholipid metabolism; phosphatidylinositol phosphate biosynthesis. Functionally, phosphoinositide-3-kinase (PI3K) phosphorylates phosphatidylinositol (PI) and its phosphorylated derivatives at position 3 of the inositol ring to produce 3-phosphoinositides. Uses ATP and PtdIns(4,5)P2 (phosphatidylinositol 4,5-bisphosphate) to generate phosphatidylinositol 3,4,5-trisphosphate (PIP3). PIP3 plays a key role by recruiting PH domain-containing proteins to the membrane, including AKT1 and PDPK1, activating signaling cascades involved in cell growth, survival, proliferation, motility and morphology. Participates in cellular signaling in response to various growth factors. Involved in the activation of AKT1 upon stimulation by receptor tyrosine kinases ligands such as EGF, insulin, IGF1, VEGFA and PDGF. Involved in signaling via insulin-receptor substrate (IRS) proteins. Essential in endothelial cell migration during vascular development through VEGFA signaling, possibly by regulating RhoA activity. Required for lymphatic vasculature development, possibly by binding to RAS and by activation by EGF and FGF2, but not by PDGF. Regulates invadopodia formation through the PDPK1-AKT1 pathway. Participates in cardiomyogenesis in embryonic stem cells through a AKT1 pathway. Participates in vasculogenesis in embryonic stem cells through PDK1 and protein kinase C pathway. Also has serine-protein kinase activity: phosphorylates PIK3R1 (p85alpha regulatory subunit), EIF4EBP1 and HRAS. Plays a role in the positive regulation of phagocytosis and pinocytosis. The sequence is that of Phosphatidylinositol 4,5-bisphosphate 3-kinase catalytic subunit alpha isoform (Pik3ca) from Mus musculus (Mouse).